The chain runs to 444 residues: Radical S-adenosyl methionine domain-containing protein 1, mitochondrial (444 aa).

The N-terminal 39 residues, 1-39 (MSTRVLTLTLLKKRHLMQCFWSTVGSVHLRSIASDKIPS), are a transit peptide targeting the mitochondrion. One can recognise a Radical SAM core domain in the interval 40–274 (HAVEASLYVH…CRVLEESGFH (235 aa)). Tyrosine 47 serves as a coordination point for S-adenosyl-L-methionine. Cysteine 53, cysteine 57, and cysteine 60 together coordinate [4Fe-4S] cluster. S-adenosyl-L-methionine is bound by residues glycine 102, 103 to 104 (GT), glutamate 135, glutamine 162, arginine 174, and aspartate 199.

Belongs to the anaerobic coproporphyrinogen-III oxidase family. HemW subfamily. The cofactor is [4Fe-4S] cluster.

The protein localises to the mitochondrion. In terms of biological role, may be a heme chaperone, appears to bind heme. Homologous bacterial proteins do not have oxygen-independent coproporphyrinogen-III oxidase activity. Binds 1 [4Fe-4S] cluster. The cluster is coordinated with 3 cysteines and an exchangeable S-adenosyl-L-methionine. The protein is Radical S-adenosyl methionine domain-containing protein 1, mitochondrial (rsad1) of Danio rerio (Zebrafish).